Consider the following 183-residue polypeptide: Thioredoxin/glutathione peroxidase BtuE (183 aa).

Residue Cys-37 is part of the active site.

It belongs to the glutathione peroxidase family. BtuE subfamily.

It is found in the periplasm. The enzyme catalyses 2 glutathione + H2O2 = glutathione disulfide + 2 H2O. The catalysed reaction is a hydroperoxide + [thioredoxin]-dithiol = an alcohol + [thioredoxin]-disulfide + H2O. Non-specific peroxidase that can use thioredoxin or glutathione as a reducing agent. In vitro, utilizes preferentially thioredoxin A to decompose hydrogen peroxide as well as cumene-, tert-butyl-, and linoleic acid hydroperoxides, suggesting that it may have one or more organic hydroperoxide as its physiological substrate. The polypeptide is Thioredoxin/glutathione peroxidase BtuE (Escherichia coli (strain K12)).